Consider the following 542-residue polypeptide: Plasminogen-binding protein PgbB (542 aa).

Residues 399 to 542 (KSASKKSQKG…RRKALEMNKK (144 aa)) form a disordered region. Basic and acidic residues-rich tracts occupy residues 418 to 435 (QERH…ENKV) and 447 to 456 (VKTRRPEPIR). Over residues 457-467 (DQNNATQQGET) the composition is skewed to polar residues. Over residues 481–542 (NAAKKEVPKP…RRKALEMNKK (62 aa)) the composition is skewed to basic and acidic residues.

It localises to the cell surface. Binds plasminogen, specifically, and in a concentration and lysine-dependent manner. Plasminogen is the precursor of plasmin, a serine protease that cleaves fibrin, fibronectin, laminin and vitronectin. Acquisition of plasminogen/plasmin could enable H.pylori to degrade host components. This chain is Plasminogen-binding protein PgbB (pgbB), found in Helicobacter pylori (strain ATCC 700392 / 26695) (Campylobacter pylori).